The primary structure comprises 449 residues: Cryptochrome DASH (449 aa).

A Photolyase/cryptochrome alpha/beta domain is found at 15 to 147 (RLGLFVFRND…PFHETPNNTL (133 aa)).

Belongs to the DNA photolyase class-1 family. FAD is required as a cofactor. Requires (6R)-5,10-methylene-5,6,7,8-tetrahydrofolate as cofactor.

May have a photoreceptor function. Binds DNA; probably functions as a transcriptional repressor. In Idiomarina loihiensis (strain ATCC BAA-735 / DSM 15497 / L2-TR), this protein is Cryptochrome DASH (cry).